The following is an 83-amino-acid chain: Large ribosomal subunit protein bL27 (83 aa).

Belongs to the bacterial ribosomal protein bL27 family.

This is Large ribosomal subunit protein bL27 from Treponema denticola (strain ATCC 35405 / DSM 14222 / CIP 103919 / JCM 8153 / KCTC 15104).